The sequence spans 1088 residues: RNA-directed RNA polymerase (1088 aa).

Residues Leu501 to Ile687 enclose the RdRp catalytic domain.

This sequence belongs to the reoviridae RNA-directed RNA polymerase family. Interacts with VP3 (Potential). Interacts with VP2; this interaction activates VP1. Interacts with NSP5; this interaction is probably necessary for the formation of functional virus factories. Interacts with NSP2; this interaction is weak. Mg(2+) is required as a cofactor.

The protein localises to the virion. The enzyme catalyses RNA(n) + a ribonucleoside 5'-triphosphate = RNA(n+1) + diphosphate. Functionally, RNA-directed RNA polymerase that is involved in both transcription and genome replication. Together with VP3 capping enzyme, forms an enzyme complex positioned near the channels situated at each of the five-fold vertices of the core. Following infection, the outermost layer of the virus is lost, leaving a double-layered particle (DLP) made up of the core and VP6 shell. VP1 then catalyzes the transcription of fully conservative plus-strand genomic RNAs that are extruded through the DLP's channels into the cytoplasm where they function as mRNAs for translation of viral proteins. One copy of each of the viral (+)RNAs is also recruited during core assembly, together with newly synthesized polymerase complexes and VP2. The polymerase of these novo-formed particles catalyzes the synthesis of complementary minus-strands leading to dsRNA formation. To do so, the polymerase specifically recognizes and binds 4 bases 5'-UGUG-3' in the conserved 3'-sequence of plus-strand RNA templates. VP2 presumably activates the autoinhibited VP1-RNA complex to coordinate packaging and genome replication. Once dsRNA synthesis is complete, the polymerase switches to the transcriptional mode, thus providing secondary transcription. In Bos taurus (Bovine), this protein is RNA-directed RNA polymerase.